The following is a 306-amino-acid chain: Acetylglutamate kinase (306 aa).

Substrate is bound by residues 75-76, arginine 97, and asparagine 197; that span reads GG.

This sequence belongs to the acetylglutamate kinase family. ArgB subfamily.

The protein resides in the cytoplasm. It carries out the reaction N-acetyl-L-glutamate + ATP = N-acetyl-L-glutamyl 5-phosphate + ADP. It functions in the pathway amino-acid biosynthesis; L-arginine biosynthesis; N(2)-acetyl-L-ornithine from L-glutamate: step 2/4. Its function is as follows. Catalyzes the ATP-dependent phosphorylation of N-acetyl-L-glutamate. The polypeptide is Acetylglutamate kinase (Streptomyces coelicolor (strain ATCC BAA-471 / A3(2) / M145)).